The following is a 197-amino-acid chain: Phosphoheptose isomerase (197 aa).

Residues 36–197 (LVHSLAQGGK…VDSLLLGVEE (162 aa)) form the SIS domain. Position 51 to 53 (51 to 53 (NGG)) interacts with substrate. His60 and Glu64 together coordinate Zn(2+). Substrate-binding positions include Glu64, 93-94 (ND), 119-121 (STS), Ser124, and Gln174. Residues Gln174 and His182 each contribute to the Zn(2+) site.

It belongs to the SIS family. GmhA subfamily. Homotetramer. Zn(2+) is required as a cofactor.

Its subcellular location is the cytoplasm. The enzyme catalyses 2 D-sedoheptulose 7-phosphate = D-glycero-alpha-D-manno-heptose 7-phosphate + D-glycero-beta-D-manno-heptose 7-phosphate. The protein operates within carbohydrate biosynthesis; D-glycero-D-manno-heptose 7-phosphate biosynthesis; D-glycero-alpha-D-manno-heptose 7-phosphate and D-glycero-beta-D-manno-heptose 7-phosphate from sedoheptulose 7-phosphate: step 1/1. Functionally, catalyzes the isomerization of sedoheptulose 7-phosphate in D-glycero-D-manno-heptose 7-phosphate. The chain is Phosphoheptose isomerase from Thiobacillus denitrificans (strain ATCC 25259 / T1).